Reading from the N-terminus, the 758-residue chain is Probable TonB-dependent receptor NMB0964 (758 aa).

Residues 1-24 (MAQTTLKPIVLSILLINTPLLAQA) form the signal peptide. Residues 50-161 (LLHTSTASDK…VAGLVDVADG (112 aa)) enclose the TBDR plug domain. The 588-residue stretch at 171 to 758 (GVSGELGLRL…SFTGGVNVKF (588 aa)) folds into the TBDR beta-barrel domain. The TonB C-terminal box signature appears at 741-758 (SDTPQMGRSFTGGVNVKF).

Belongs to the TonB-dependent receptor family.

The protein localises to the cell outer membrane. In terms of biological role, probable receptor, TonB-dependent. This is Probable TonB-dependent receptor NMB0964 from Neisseria meningitidis serogroup B (strain ATCC BAA-335 / MC58).